The chain runs to 740 residues: Dipeptidyl peptidase family member 6 (740 aa).

A topological domain (cytoplasmic) is located at residue Met1. A helical; Signal-anchor for type II membrane protein membrane pass occupies residues 2–22; the sequence is LFLPILILNLLIITHAIDIIP. Topologically, residues 23-740 are lumenal; it reads REVLFQDPKY…VMNRIFPVQG (718 aa). N-linked (GlcNAc...) asparagine glycans are attached at residues Asn108, Asn308, and Asn506. Residues Ser516, Asp604, and His636 each act as charge relay system in the active site. A disulfide bridge connects residues Cys535 and Cys658. Asn672 is a glycosylation site (N-linked (GlcNAc...) asparagine).

This sequence belongs to the peptidase S9B family. DPPIV subfamily.

It is found in the cell membrane. In terms of biological role, removes N-terminal dipeptides sequentially from polypeptides. Essential for control of distal tip cell migration. This chain is Dipeptidyl peptidase family member 6 (dpf-6), found in Caenorhabditis elegans.